Reading from the N-terminus, the 554-residue chain is 3-(3-hydroxy-phenyl)propionate/3-hydroxycinnamic acid hydroxylase (554 aa).

Residues 17 to 46 and 285 to 295 each bind FAD; these read QVAI…LVEK and FRIDRVLLAGD.

Belongs to the PheA/TfdB FAD monooxygenase family. FAD is required as a cofactor.

The enzyme catalyses 3-(3-hydroxyphenyl)propanoate + NADH + O2 + H(+) = 3-(2,3-dihydroxyphenyl)propanoate + NAD(+) + H2O. The catalysed reaction is (2E)-3-(3-hydroxyphenyl)prop-2-enoate + NADH + O2 + H(+) = (2E)-3-(2,3-dihydroxyphenyl)prop-2-enoate + NAD(+) + H2O. It participates in aromatic compound metabolism; 3-phenylpropanoate degradation. Catalyzes the insertion of one atom of molecular oxygen into position 2 of the phenyl ring of 3-(3-hydroxyphenyl)propionate (3-HPP) and hydroxycinnamic acid (3HCI). The sequence is that of 3-(3-hydroxy-phenyl)propionate/3-hydroxycinnamic acid hydroxylase from Klebsiella pneumoniae (strain 342).